Here is a 546-residue protein sequence, read N- to C-terminus: Chaperonin GroEL 6 (546 aa).

Residues 30 to 33 (TLGP), Lys51, 87 to 91 (DGTTT), Gly415, and Asp496 contribute to the ATP site.

This sequence belongs to the chaperonin (HSP60) family. In terms of assembly, forms a cylinder of 14 subunits composed of two heptameric rings stacked back-to-back. Interacts with the co-chaperonin GroES.

The protein localises to the cytoplasm. It catalyses the reaction ATP + H2O + a folded polypeptide = ADP + phosphate + an unfolded polypeptide.. In terms of biological role, together with its co-chaperonin GroES, plays an essential role in assisting protein folding. The GroEL-GroES system forms a nano-cage that allows encapsulation of the non-native substrate proteins and provides a physical environment optimized to promote and accelerate protein folding. The sequence is that of Chaperonin GroEL 6 from Bradyrhizobium diazoefficiens (strain JCM 10833 / BCRC 13528 / IAM 13628 / NBRC 14792 / USDA 110).